We begin with the raw amino-acid sequence, 1342 residues long: DNA-directed RNA polymerase subunit beta (1342 aa).

It belongs to the RNA polymerase beta chain family. In terms of assembly, the RNAP catalytic core consists of 2 alpha, 1 beta, 1 beta' and 1 omega subunit. When a sigma factor is associated with the core the holoenzyme is formed, which can initiate transcription.

It carries out the reaction RNA(n) + a ribonucleoside 5'-triphosphate = RNA(n+1) + diphosphate. In terms of biological role, DNA-dependent RNA polymerase catalyzes the transcription of DNA into RNA using the four ribonucleoside triphosphates as substrates. This is DNA-directed RNA polymerase subunit beta from Cronobacter sakazakii (strain ATCC BAA-894) (Enterobacter sakazakii).